The primary structure comprises 450 residues: Putative cysteine--tRNA ligase 2 (450 aa).

Residues 29-39 carry the 'HIGH' region motif; that stretch reads ITPYKSTHLGH. The 'KMSKS' region motif lies at 270–274; that stretch reads KMSKS. Residue Lys273 coordinates ATP. A disordered region spans residues 372–392; the sequence is PIHPKHSPQMRDYSEHGSAGQ.

This sequence belongs to the class-I aminoacyl-tRNA synthetase family. Monomer.

It is found in the cytoplasm. The catalysed reaction is tRNA(Cys) + L-cysteine + ATP = L-cysteinyl-tRNA(Cys) + AMP + diphosphate. This chain is Putative cysteine--tRNA ligase 2 (cysS2), found in Tropheryma whipplei (strain TW08/27) (Whipple's bacillus).